We begin with the raw amino-acid sequence, 339 residues long: Ketol-acid reductoisomerase (NADP(+)) (339 aa).

The KARI N-terminal Rossmann domain occupies 1–182 (MRVYYDRDAD…GGGRAGIIET (182 aa)). Residues 24 to 27 (YGSQ), R48, S51, and 83 to 86 (DEGQ) contribute to the NADP(+) site. H108 is an active-site residue. An NADP(+)-binding site is contributed by G134. The KARI C-terminal knotted domain maps to 183–328 (TFKEEVETDL…EKLRAMMPWI (146 aa)). The Mg(2+) site is built by D191, E195, E227, and E231. S252 contributes to the substrate binding site.

Belongs to the ketol-acid reductoisomerase family. The cofactor is Mg(2+).

It catalyses the reaction (2R)-2,3-dihydroxy-3-methylbutanoate + NADP(+) = (2S)-2-acetolactate + NADPH + H(+). The catalysed reaction is (2R,3R)-2,3-dihydroxy-3-methylpentanoate + NADP(+) = (S)-2-ethyl-2-hydroxy-3-oxobutanoate + NADPH + H(+). It functions in the pathway amino-acid biosynthesis; L-isoleucine biosynthesis; L-isoleucine from 2-oxobutanoate: step 2/4. Its pathway is amino-acid biosynthesis; L-valine biosynthesis; L-valine from pyruvate: step 2/4. Functionally, involved in the biosynthesis of branched-chain amino acids (BCAA). Catalyzes an alkyl-migration followed by a ketol-acid reduction of (S)-2-acetolactate (S2AL) to yield (R)-2,3-dihydroxy-isovalerate. In the isomerase reaction, S2AL is rearranged via a Mg-dependent methyl migration to produce 3-hydroxy-3-methyl-2-ketobutyrate (HMKB). In the reductase reaction, this 2-ketoacid undergoes a metal-dependent reduction by NADPH to yield (R)-2,3-dihydroxy-isovalerate. The protein is Ketol-acid reductoisomerase (NADP(+)) of Gluconobacter oxydans (strain 621H) (Gluconobacter suboxydans).